Consider the following 443-residue polypeptide: Porin D (443 aa).

A signal peptide spans 1–23; it reads MKVMKWSAIALAVSAGSTQFAVA. Active-site residues include H179, D231, and S319.

It belongs to the outer membrane porin (Opr) (TC 1.B.25) family.

The protein resides in the cell outer membrane. Porin with a specificity for basic amino acids. Involved in facilitated diffusion of carbapenem beta-lactam antibiotics, such as imipenem and meropenem. Also possesses serine protease activity. This chain is Porin D (oprD), found in Pseudomonas aeruginosa (strain ATCC 15692 / DSM 22644 / CIP 104116 / JCM 14847 / LMG 12228 / 1C / PRS 101 / PAO1).